Reading from the N-terminus, the 460-residue chain is NADH-ubiquinone oxidoreductase chain 4 (460 aa).

A run of 12 helical transmembrane segments spans residues 20–42 (PKWLWSTTTAHGLLIALISLTWL), 61–81 (PLSTPLLGLTCWLLPLMVLAS), 93–113 (QRLYITLLASLQTFLIMAFGA), 114–134 (TEIIMFYIMFEATLIPTLIII), 148–168 (TYFLFYTLAGSLPLLVALLLL), 195–215 (IWWAGCLIAFLVKMPLYGVHL), 225–245 (PVAGSMVLAAVLLKLGGYGMM), 258–278 (LAYPFIILALWGIIMTGSICL), 285–304 (SLIAYSSVSHMGLVAGGILI), 309–331 (GFTGAIILMIAHGLVSSALFCLA), 351–371 (MIFPLTAVWWFIANLANLALP), and 394–414 (IILTGTGTLITAGYSLYLFLM).

Belongs to the complex I subunit 4 family.

The protein localises to the mitochondrion membrane. The catalysed reaction is a ubiquinone + NADH + 5 H(+)(in) = a ubiquinol + NAD(+) + 4 H(+)(out). Core subunit of the mitochondrial membrane respiratory chain NADH dehydrogenase (Complex I) that is believed to belong to the minimal assembly required for catalysis. Complex I functions in the transfer of electrons from NADH to the respiratory chain. The immediate electron acceptor for the enzyme is believed to be ubiquinone. This Formosania lacustris (Oriental stream loach) protein is NADH-ubiquinone oxidoreductase chain 4 (MT-ND4).